A 174-amino-acid polypeptide reads, in one-letter code: Small ribosomal subunit protein bS16 (174 aa).

The segment at 81-174 is disordered; sequence QRFTGEPAPP…DATTDATPSA (94 aa). Over residues 87–97 the composition is skewed to pro residues; it reads PAPPPMKTAPP. Residues 98–118 show a composition bias toward basic and acidic residues; it reads KPDKKALFEAAAKEAAGEPRA. A compositionally biased stretch (low complexity) spans 135–158; sequence ETTPAAEAAPDAAASADEPAGGAS. Residues 160–174 are compositionally biased toward polar residues; sequence AAESQDATTDATPSA.

The protein belongs to the bacterial ribosomal protein bS16 family.

The protein is Small ribosomal subunit protein bS16 of Acidothermus cellulolyticus (strain ATCC 43068 / DSM 8971 / 11B).